The following is a 121-amino-acid chain: Phosphoribosyl-ATP pyrophosphatase (121 aa).

The protein belongs to the PRA-PH family.

It localises to the cytoplasm. It carries out the reaction 1-(5-phospho-beta-D-ribosyl)-ATP + H2O = 1-(5-phospho-beta-D-ribosyl)-5'-AMP + diphosphate + H(+). Its pathway is amino-acid biosynthesis; L-histidine biosynthesis; L-histidine from 5-phospho-alpha-D-ribose 1-diphosphate: step 2/9. The protein is Phosphoribosyl-ATP pyrophosphatase of Burkholderia vietnamiensis (strain G4 / LMG 22486) (Burkholderia cepacia (strain R1808)).